A 33-amino-acid polypeptide reads, in one-letter code: AKEAAAPTTLKGDQVLKDIFYEVKNKLETAIGV.

The protein resides in the mitochondrion. It is found in the mitochondrion inner membrane. In terms of biological role, mitochondrial membrane ATP synthase (F(1)F(0) ATP synthase or Complex V) produces ATP from ADP in the presence of a proton gradient across the membrane which is generated by electron transport complexes of the respiratory chain. F-type ATPases consist of two structural domains, F(1) - containing the extramembraneous catalytic core and F(0) - containing the membrane proton channel, linked together by a central stalk and a peripheral stalk. During catalysis, ATP synthesis in the catalytic domain of F(1) is coupled via a rotary mechanism of the central stalk subunits to proton translocation. Part of the complex F(0) domain. In Solanum tuberosum (Potato), this protein is ATP synthase 27 kDa subunit, mitochondrial.